A 1714-amino-acid polypeptide reads, in one-letter code: Bifunctional glutamate/proline--tRNA ligase (1714 aa).

The segment at 166–191 (DAKVKRSPQSSKEQTPAKTGERKQEG) is disordered. A glutamate--tRNA ligase region spans residues 170 to 754 (KRSPQSSKEQ…ASELDSQISQ (585 aa)). Residues 172–182 (SPQSSKEQTPA) show a composition bias toward polar residues. A 'HIGH' region motif is present at residues 209–220 (PPEASGYLHIGH). Positions 438 to 442 (VLSKR) match the 'KMSKS' region motif. Disordered regions lie at residues 718-754 (PTSG…QISQ), 791-817 (GKDW…ANDA), and 943-962 (GTTA…EKNP). 2 stretches are compositionally biased toward low complexity: residues 734-746 (KASS…GQAS) and 800-817 (SASS…ANDA). WHEP-TRS domains are found at residues 744 to 800 (QASE…GQTS), 816 to 872 (DAVS…GTVP), 890 to 946 (SVAQ…GTTA), 969 to 1025 (TVNT…GTVA), and 1044 to 1100 (DVGS…DAKS). The 6 X 57 AA approximate repeats stretch occupies residues 755-1201 (QGDLVRDLKS…KPAKPVKKEP (447 aa)). 2 disordered regions span residues 1093–1119 (DWTP…SPAK) and 1168–1210 (FPVA…GAVK). A compositionally biased stretch (basic and acidic residues) spans 1094–1109 (WTPDAKSEPAVVKKEA). S1110 is modified (phosphoserine). Residues 1118–1174 (AKDELTQEINAQGEKVRAAKGNKAAKEVIDAEVAKLLALKAKYKEVTGTDFPVAGRG) enclose the WHEP-TRS 6 domain. Gly residues predominate over residues 1172–1181 (GRGGGGGGGS). The interval 1207–1714 (GAVKKQTRLG…KFYTLFGRSY (508 aa)) is proline--tRNA ligase. L-proline is bound by residues 1322–1324 (TSE) and R1353. ATP-binding residues include R1353, E1355, R1364, T1365, Q1438, and T1441. A Mg(2+)-binding site is contributed by Q1438. Position 1443 (H1443) interacts with L-proline. ATP is bound by residues T1476 and R1478. C1648, C1653, and C1695 together coordinate Zn(2+).

This sequence in the N-terminal section; belongs to the class-I aminoacyl-tRNA synthetase family. Glutamate--tRNA ligase type 2 subfamily. In the C-terminal section; belongs to the class-II aminoacyl-tRNA synthetase family. In terms of assembly, component of the multisynthetase complex which is comprised of a bifunctional glutamyl-prolyl-tRNA synthetase, the monospecific isoleucyl, leucyl, glutaminyl, methionyl, lysyl, arginyl, and aspartyl-tRNA synthetases as well as three auxiliary proteins, p18, p48 and p43.

The enzyme catalyses tRNA(Glu) + L-glutamate + ATP = L-glutamyl-tRNA(Glu) + AMP + diphosphate. It catalyses the reaction tRNA(Pro) + L-proline + ATP = L-prolyl-tRNA(Pro) + AMP + diphosphate. Catalyzes the attachment of both L-glutamate and L-proline to their cognate tRNAs in a two-step reaction where the amino acid is first activated by ATP to form a covalent intermediate with AMP. Subsequently, the activated amino acid is transferred to the acceptor end of the cognate tRNA to form L-glutamyl-tRNA(Glu) and L-prolyl-tRNA(Pro). This chain is Bifunctional glutamate/proline--tRNA ligase, found in Drosophila melanogaster (Fruit fly).